The sequence spans 290 residues: tRNA pseudouridine synthase A (290 aa).

Asp-56 acts as the Nucleophile in catalysis. Tyr-109 contacts substrate.

Belongs to the tRNA pseudouridine synthase TruA family.

The enzyme catalyses uridine(38/39/40) in tRNA = pseudouridine(38/39/40) in tRNA. Functionally, formation of pseudouridine at positions 38, 39 and 40 in the anticodon stem and loop of transfer RNAs. The protein is tRNA pseudouridine synthase A of Methanobrevibacter smithii (strain ATCC 35061 / DSM 861 / OCM 144 / PS).